Reading from the N-terminus, the 375-residue chain is Glutamate 5-kinase (375 aa).

Lysine 17 serves as a coordination point for ATP. The substrate site is built by serine 57, aspartate 144, and asparagine 158. Residue 178-179 participates in ATP binding; that stretch reads TD. The PUA domain maps to 284–360; that stretch reads SGSIVVDTGA…NEIADILGYK (77 aa).

Belongs to the glutamate 5-kinase family.

It localises to the cytoplasm. It catalyses the reaction L-glutamate + ATP = L-glutamyl 5-phosphate + ADP. It functions in the pathway amino-acid biosynthesis; L-proline biosynthesis; L-glutamate 5-semialdehyde from L-glutamate: step 1/2. Functionally, catalyzes the transfer of a phosphate group to glutamate to form L-glutamate 5-phosphate. This is Glutamate 5-kinase from Methanococcoides burtonii (strain DSM 6242 / NBRC 107633 / OCM 468 / ACE-M).